A 541-amino-acid polypeptide reads, in one-letter code: Chaperonin GroEL 2 (541 aa).

ATP-binding positions include 29–32, 86–90, Gly413, 476–478, and Asp492; these read TLGP, DGTTT, and NAA.

This sequence belongs to the chaperonin (HSP60) family. Forms a cylinder of 14 subunits composed of two heptameric rings stacked back-to-back. Interacts with the co-chaperonin GroES.

The protein localises to the cytoplasm. The enzyme catalyses ATP + H2O + a folded polypeptide = ADP + phosphate + an unfolded polypeptide.. Together with its co-chaperonin GroES, plays an essential role in assisting protein folding. The GroEL-GroES system forms a nano-cage that allows encapsulation of the non-native substrate proteins and provides a physical environment optimized to promote and accelerate protein folding. This Streptomyces coelicolor (strain ATCC BAA-471 / A3(2) / M145) protein is Chaperonin GroEL 2.